Consider the following 35-residue polypeptide: Hemocyanin A chain (35 aa).

This sequence belongs to the tyrosinase family. Hemocyanin subfamily. Hemolymph.

The protein localises to the secreted. It localises to the extracellular space. Its function is as follows. Hemocyanins are copper-containing oxygen carriers occurring freely dissolved in the hemolymph of many mollusks and arthropods. The chain is Hemocyanin A chain from Cherax destructor (Common yabby crayfish).